The primary structure comprises 266 residues: Chymotrypsin-like elastase family member 1 (266 aa).

Positions 1-16 (MLRFLVFASLVLYGHS) are cleaved as a signal peptide. Residues 17–26 (TQDFPETNAR) constitute a propeptide, activation peptide. The Peptidase S1 domain occupies 27–264 (VVGGAEARRN…YISWMNNVIA (238 aa)). The cysteines at positions 56 and 72 are disulfide-linked. The Charge relay system role is filled by H71. Ca(2+)-binding residues include D85, N87, Q90, and E95. D119 (charge relay system) is an active-site residue. Disulfide bonds link C153-C220, C184-C200, and C210-C240. S214 (charge relay system) is an active-site residue.

It belongs to the peptidase S1 family. Elastase subfamily. Requires Ca(2+) as cofactor. As to expression, pancreas.

The protein resides in the secreted. It carries out the reaction Hydrolysis of proteins, including elastin. Preferential cleavage: Ala-|-Xaa.. In terms of biological role, serine proteases that hydrolyze many proteins in addition to elastin. The polypeptide is Chymotrypsin-like elastase family member 1 (Cela1) (Rattus norvegicus (Rat)).